Here is a 945-residue protein sequence, read N- to C-terminus: Isoleucine--tRNA ligase (945 aa).

The short motif at Pro-66–His-76 is the 'HIGH' region element. Residue Glu-581 participates in L-isoleucyl-5'-AMP binding. The short motif at Lys-622–Ser-626 is the 'KMSKS' region element. Residue Lys-625 coordinates ATP. Zn(2+) is bound by residues Cys-908, Cys-911, Cys-928, and Cys-931.

Belongs to the class-I aminoacyl-tRNA synthetase family. IleS type 1 subfamily. In terms of assembly, monomer. Requires Zn(2+) as cofactor.

It is found in the cytoplasm. It catalyses the reaction tRNA(Ile) + L-isoleucine + ATP = L-isoleucyl-tRNA(Ile) + AMP + diphosphate. Its function is as follows. Catalyzes the attachment of isoleucine to tRNA(Ile). As IleRS can inadvertently accommodate and process structurally similar amino acids such as valine, to avoid such errors it has two additional distinct tRNA(Ile)-dependent editing activities. One activity is designated as 'pretransfer' editing and involves the hydrolysis of activated Val-AMP. The other activity is designated 'posttransfer' editing and involves deacylation of mischarged Val-tRNA(Ile). This Burkholderia cenocepacia (strain ATCC BAA-245 / DSM 16553 / LMG 16656 / NCTC 13227 / J2315 / CF5610) (Burkholderia cepacia (strain J2315)) protein is Isoleucine--tRNA ligase.